Reading from the N-terminus, the 468-residue chain is Homocitrate synthase (468 aa).

One can recognise a Pyruvate carboxyltransferase domain in the interval 11 to 266 (VGILDSTLRE…IEVVDLKKLS (256 aa)). Residue Arg19 participates in 2-oxoglutarate binding. A Mg(2+)-binding site is contributed by Glu20. Residues His83, Arg143, and Thr177 each contribute to the 2-oxoglutarate site. Residues His205 and His207 each coordinate Mg(2+). His299 functions as the Proton acceptor in the catalytic mechanism.

This sequence belongs to the alpha-IPM synthase/homocitrate synthase family. Homocitrate synthase LYS20/LYS21 subfamily. Mg(2+) is required as a cofactor. Mn(2+) serves as cofactor.

It catalyses the reaction acetyl-CoA + 2-oxoglutarate + H2O = (2R)-homocitrate + CoA + H(+). It participates in amino-acid biosynthesis; L-lysine biosynthesis via AAA pathway; L-alpha-aminoadipate from 2-oxoglutarate: step 1/5. Its activity is regulated as follows. Inhibited by lysine. Catalyzes the aldol-type condensation of 2-oxoglutarate with acetyl-CoA to yield homocitrate. Carries out the first step of the alpha-aminoadipate (AAA) lysine biosynthesis pathway. Does not display 2-isopropylmalate synthase and citramalate synthase activities since it cannot use 2-oxoisovalerate or pyruvate as substrate. This chain is Homocitrate synthase, found in Sulfolobus acidocaldarius (strain ATCC 33909 / DSM 639 / JCM 8929 / NBRC 15157 / NCIMB 11770).